A 317-amino-acid chain; its full sequence is MYSKILSTGSYLPKHIRTNADLEKMVDTSDEWISERTGIKERRIAEASETVATMGFEAAQNCLAVSPMDVNEIDLIVVATTSATHAFPSTACQIQKMLGIKDAIAFDVAAACSGFVYALTVADQFIRTGKVKKALVIGADLFSRALNPEDRGTIILFGDGAGAVILEASEQAGIISTHLHATGESAEVLTLANQARGIESDPAYLEMQGNATFKIAVRELANVVEETLEANQLDKKDIDWLVPHQANLRIISATAKKLDMDMSQVVVTLDRHGNTSAGSIPSALDEAVRDGRIQRGQLLLLEAFGGGLTWGSALVRF.

Residues C112 and H244 contribute to the active site. The segment at 245–249 (QANLR) is ACP-binding. Residue N274 is part of the active site.

It belongs to the thiolase-like superfamily. FabH family. As to quaternary structure, homodimer.

It is found in the cytoplasm. The catalysed reaction is malonyl-[ACP] + acetyl-CoA + H(+) = 3-oxobutanoyl-[ACP] + CO2 + CoA. The protein operates within lipid metabolism; fatty acid biosynthesis. Its function is as follows. Catalyzes the condensation reaction of fatty acid synthesis by the addition to an acyl acceptor of two carbons from malonyl-ACP. Catalyzes the first condensation reaction which initiates fatty acid synthesis and may therefore play a role in governing the total rate of fatty acid production. Possesses both acetoacetyl-ACP synthase and acetyl transacylase activities. Its substrate specificity determines the biosynthesis of branched-chain and/or straight-chain of fatty acids. The sequence is that of Beta-ketoacyl-[acyl-carrier-protein] synthase III from Pasteurella multocida (strain Pm70).